The primary structure comprises 451 residues: Ubiquinone biosynthesis monooxygenase COQ6, mitochondrial (451 aa).

The protein belongs to the UbiH/COQ6 family. In terms of assembly, component of a multi-subunit COQ enzyme complex. The cofactor is FAD.

It localises to the mitochondrion inner membrane. It catalyses the reaction a 4-hydroxy-3-(all-trans-polyprenyl)benzoate + 2 reduced [2Fe-2S]-[ferredoxin] + O2 + 2 H(+) = a 3,4-dihydroxy-5-(all-trans-polyprenyl)benzoate + 2 oxidized [2Fe-2S]-[ferredoxin] + H2O. The enzyme catalyses a 2-methoxy-6-(all-trans-polyprenyl)phenol + 2 reduced [2Fe-2S]-[ferredoxin] + O2 + 2 H(+) = a 2-methoxy-6-(all-trans-polyprenyl)benzene-1,4-diol + 2 oxidized [2Fe-2S]-[ferredoxin] + H2O. Its pathway is cofactor biosynthesis; ubiquinone biosynthesis. Functionally, FAD-dependent monooxygenase required for two non-consecutive steps during ubiquinone biosynthesis. Required for the C5-ring hydroxylation during ubiquinone biosynthesis by catalyzing the hydroxylation of 4-hydroxy-3-(all-trans-polyprenyl)benzoic acid to 3,4-dihydroxy-5-(all-trans-polyprenyl)benzoic acid. Also acts downstream of coq4, for the C1-hydroxylation during ubiquinone biosynthesis by catalyzing the hydroxylation of 2-methoxy-6-(all-trans-polyprenyl)phenol to 2-methoxy-6-(all-trans-polyprenyl)benzene-1,4-diol. The electrons required for the hydroxylation reaction are funneled indirectly to coq-6 from NADPH via a ferredoxin/ferredoxin reductase system. This chain is Ubiquinone biosynthesis monooxygenase COQ6, mitochondrial, found in Caenorhabditis elegans.